Here is a 284-residue protein sequence, read N- to C-terminus: Tropomyosin (284 aa).

Positions 1 to 284 (MDGIKKKMIA…DQTFAELTGY (284 aa)) form a coiled coil. Basic and acidic residues-rich tracts occupy residues 29-42 (LKQK…KETE) and 111-136 (AKFD…RSIA). Disordered regions lie at residues 29–49 (LKQK…LNNR) and 111–149 (AKFD…DQQK).

The protein belongs to the tropomyosin family.

In terms of biological role, tropomyosin, in association with the troponin complex, plays a central role in the calcium dependent regulation of muscle contraction. This Clonorchis sinensis (Chinese liver fluke) protein is Tropomyosin.